A 634-amino-acid polypeptide reads, in one-letter code: MSIITTAFALSLLATTAFAVPPETPRIELQAERGLGDQSYAPWQVDCPSNVTWIRNATTGLGTGERAYIEAREKLVQPAIEQMMAARGLETPPRTPVIGVALAGGGYRAMLTGLGGIMGMMNESTEASQSETGGWLDGVSYWSGLSGGSWATGSFMSNGGQLPTTLLENLWNIDSNLVFPDDGKLSFYTNLYTETNAKSDLGFPVQITDIWGLAIGSHVLPEPYQLSNTPNLTFSSLPSVVAALGNASLPMPIIVAAEREAGELVIAENATVWEFTPYEFGSWAFGSQYKSPGAFTPIEYLGTSVDDGSPNGTCWKGFDQLSFVMGTSATLFNGAFLELNGTDSGLLTNLITAFLADLGEDQADISRIPNSFSNYNSGENPIYNLTYITLVDAGETNQNIPLEPLLVPTRDVDAIVAFDSSYDSDYIWPNGTALRTTYERAKILAEHENTRVLMPEVPSMNGFVNGGYNSRPTFFGCNDTTTPVIIYIPSYPWSFAANTSTYQLSYENNEANEMLLNGMRSLTLNHSVPTWPTCFACALTDRSFMYTSENRSTTCQECFDTWCWAGDDNTTEPANYEPVINSVPPWLIANNLSIGMADAPGSNESTAGTASSGAAKMGVGMGMVALTAGLGLML.

A signal peptide spans 1–19; that stretch reads MSIITTAFALSLLATTAFA. The PLA2c domain occupies 46–569; it reads DCPSNVTWIR…DTWCWAGDDN (524 aa). Asparagine 50, asparagine 56, asparagine 122, asparagine 231, asparagine 246, asparagine 269, asparagine 311, asparagine 340, asparagine 384, asparagine 430, asparagine 478, asparagine 498, asparagine 525, asparagine 550, asparagine 569, asparagine 591, and asparagine 603 each carry an N-linked (GlcNAc...) asparagine glycan.

It belongs to the lysophospholipase family. N-glycosylated.

Its subcellular location is the secreted. It carries out the reaction a 1-acyl-sn-glycero-3-phosphocholine + H2O = sn-glycerol 3-phosphocholine + a fatty acid + H(+). Its function is as follows. Exhibits phospholipase B (PLB), lysophospholipase (LPL) and lysophospholipase/transacylase (LPTA) activities. The chain is Phospholipase B (PLB1) from Cryptococcus neoformans var. neoformans serotype D (strain JEC21 / ATCC MYA-565) (Filobasidiella neoformans).